The primary structure comprises 99 residues: DNA-binding protein HU (99 aa).

Belongs to the bacterial histone-like protein family. In terms of assembly, homodimer.

Functionally, histone-like DNA-binding protein which is capable of wrapping DNA to stabilize it, and thus to prevent its denaturation under extreme environmental conditions. This Rickettsia typhi (strain ATCC VR-144 / Wilmington) protein is DNA-binding protein HU (hup).